A 203-amino-acid polypeptide reads, in one-letter code: 3-isopropylmalate dehydratase small subunit (203 aa).

This sequence belongs to the LeuD family. LeuD type 1 subfamily. As to quaternary structure, heterodimer of LeuC and LeuD.

The enzyme catalyses (2R,3S)-3-isopropylmalate = (2S)-2-isopropylmalate. It participates in amino-acid biosynthesis; L-leucine biosynthesis; L-leucine from 3-methyl-2-oxobutanoate: step 2/4. Its function is as follows. Catalyzes the isomerization between 2-isopropylmalate and 3-isopropylmalate, via the formation of 2-isopropylmaleate. The polypeptide is 3-isopropylmalate dehydratase small subunit (Pelagibacter ubique (strain HTCC1062)).